The sequence spans 626 residues: NAD-dependent malic enzyme, mitochondrial (626 aa).

The transit peptide at 1-34 (MAIFSNQMRLSSTLLKRLHQRVAAAVNSSSSRNF) directs the protein to the mitochondrion. Fumarate contacts are provided by Arg-91 and Arg-125. The Proton donor role is filled by Tyr-146. Arg-199 serves as a coordination point for (S)-malate. An NAD(+)-binding site is contributed by Arg-199. Lys-217 functions as the Proton acceptor in the catalytic mechanism. A divalent metal cation-binding residues include Glu-288, Asp-289, and Asp-312. Positions 348 and 351 each coordinate NAD(+). Positions 467 and 512 each coordinate (S)-malate.

This sequence belongs to the malic enzymes family. Heterodimer of two related subunits. Requires Mg(2+) as cofactor. Mn(2+) serves as cofactor.

It is found in the mitochondrion matrix. It carries out the reaction (S)-malate + NAD(+) = pyruvate + CO2 + NADH. The polypeptide is NAD-dependent malic enzyme, mitochondrial (Solanum tuberosum (Potato)).